Consider the following 445-residue polypeptide: Chromosome partition protein MukF (445 aa).

The segment at 213–241 (LSETSSTLRELQDTLQAASDELQTQILDI) is leucine-zipper.

It belongs to the MukF family. In terms of assembly, interacts, and probably forms a ternary complex, with MukE and MukB via its C-terminal region. The complex formation is stimulated by calcium or magnesium. It is required for an interaction between MukE and MukB.

It is found in the cytoplasm. The protein localises to the nucleoid. Its function is as follows. Involved in chromosome condensation, segregation and cell cycle progression. May participate in facilitating chromosome segregation by condensation DNA from both sides of a centrally located replisome during cell division. Not required for mini-F plasmid partitioning. Probably acts via its interaction with MukB and MukE. Overexpression results in anucleate cells. It has a calcium binding activity. This chain is Chromosome partition protein MukF, found in Vibrio parahaemolyticus serotype O3:K6 (strain RIMD 2210633).